The chain runs to 86 residues: Small ribosomal subunit protein bS20 (86 aa).

Positions 1–25 are disordered; that stretch reads MANIKSQIKRIRTNEKARQRNKAYK. Over residues 12 to 25 the composition is skewed to basic and acidic residues; it reads RTNEKARQRNKAYK.

This sequence belongs to the bacterial ribosomal protein bS20 family.

Functionally, binds directly to 16S ribosomal RNA. The polypeptide is Small ribosomal subunit protein bS20 (Beutenbergia cavernae (strain ATCC BAA-8 / DSM 12333 / CCUG 43141 / JCM 11478 / NBRC 16432 / NCIMB 13614 / HKI 0122)).